The following is a 186-amino-acid chain: TATA-box-binding protein B (186 aa).

A run of 2 repeats spans residues 10 to 86 (IENV…FGDI) and 101 to 179 (VQNI…QDRL).

Belongs to the TBP family.

Functionally, general factor that plays a role in the activation of archaeal genes transcribed by RNA polymerase. Binds specifically to the TATA box promoter element which lies close to the position of transcription initiation. This Halobacterium salinarum (strain ATCC 700922 / JCM 11081 / NRC-1) (Halobacterium halobium) protein is TATA-box-binding protein B (tbpB1).